We begin with the raw amino-acid sequence, 1358 residues long: DNA-directed RNA polymerase subunit beta (1358 aa).

It belongs to the RNA polymerase beta chain family. In terms of assembly, the RNAP catalytic core consists of 2 alpha, 1 beta, 1 beta' and 1 omega subunit. When a sigma factor is associated with the core the holoenzyme is formed, which can initiate transcription.

It carries out the reaction RNA(n) + a ribonucleoside 5'-triphosphate = RNA(n+1) + diphosphate. DNA-dependent RNA polymerase catalyzes the transcription of DNA into RNA using the four ribonucleoside triphosphates as substrates. The sequence is that of DNA-directed RNA polymerase subunit beta from Neorickettsia sennetsu (strain ATCC VR-367 / Miyayama) (Ehrlichia sennetsu).